A 110-amino-acid chain; its full sequence is Phosphoribosyl-AMP cyclohydrolase (110 aa).

Residue Asp80 coordinates Mg(2+). Cys81 contacts Zn(2+). The Mg(2+) site is built by Asp82 and Asp84. Residues Cys97 and Cys104 each contribute to the Zn(2+) site.

It belongs to the PRA-CH family. Homodimer. Mg(2+) serves as cofactor. Zn(2+) is required as a cofactor.

It localises to the cytoplasm. The enzyme catalyses 1-(5-phospho-beta-D-ribosyl)-5'-AMP + H2O = 1-(5-phospho-beta-D-ribosyl)-5-[(5-phospho-beta-D-ribosylamino)methylideneamino]imidazole-4-carboxamide. Its pathway is amino-acid biosynthesis; L-histidine biosynthesis; L-histidine from 5-phospho-alpha-D-ribose 1-diphosphate: step 3/9. Its function is as follows. Catalyzes the hydrolysis of the adenine ring of phosphoribosyl-AMP. The chain is Phosphoribosyl-AMP cyclohydrolase from Clostridium botulinum (strain Kyoto / Type A2).